A 128-amino-acid chain; its full sequence is Aspartate 1-decarboxylase (128 aa).

Catalysis depends on Ser-25, which acts as the Schiff-base intermediate with substrate; via pyruvic acid. Pyruvic acid (Ser) is present on Ser-25. Thr-57 contributes to the substrate binding site. Tyr-58 acts as the Proton donor in catalysis. A substrate-binding site is contributed by 73 to 75; sequence GAA.

The protein belongs to the PanD family. Heterooctamer of four alpha and four beta subunits. Pyruvate is required as a cofactor. In terms of processing, is synthesized initially as an inactive proenzyme, which is activated by self-cleavage at a specific serine bond to produce a beta-subunit with a hydroxyl group at its C-terminus and an alpha-subunit with a pyruvoyl group at its N-terminus.

It is found in the cytoplasm. The enzyme catalyses L-aspartate + H(+) = beta-alanine + CO2. It functions in the pathway cofactor biosynthesis; (R)-pantothenate biosynthesis; beta-alanine from L-aspartate: step 1/1. Catalyzes the pyruvoyl-dependent decarboxylation of aspartate to produce beta-alanine. The polypeptide is Aspartate 1-decarboxylase (Chlorobium phaeovibrioides (strain DSM 265 / 1930) (Prosthecochloris vibrioformis (strain DSM 265))).